Consider the following 121-residue polypeptide: uncharacterized protein (121 aa).

3 helical membrane passes run 1 to 21 (MILWGGSGGYLVIILYTIMPV), 55 to 75 (LKYINAFKGLLFHVCLHFCSI), and 92 to 112 (LFFKAAVISGIFRYTIPIHFL).

It is found in the membrane. This is an uncharacterized protein from Saccharomyces cerevisiae (strain ATCC 204508 / S288c) (Baker's yeast).